The chain runs to 229 residues: Stage III sporulation protein AG (229 aa).

Residues 30 to 50 (YHYFLFVFVLGVSFMLVSQLF) form a helical membrane-spanning segment. 2 disordered regions span residues 64 to 93 (AVSS…KDSI) and 136 to 159 (SNKN…DQSS). A compositionally biased stretch (basic and acidic residues) spans 71 to 93 (ADSKEKTAEVFKASKSDKPKDSI).

It is found in the cell membrane. This Bacillus subtilis (strain 168) protein is Stage III sporulation protein AG (spoIIIAG).